The chain runs to 306 residues: Follistatin-related protein 1 (306 aa).

The N-terminal stretch at 1-18 (MWKRWLALSLVTIALVHG) is a signal peptide. Residues 28 to 51 (ICANVFCGAGRECAVTEKGEPTCL) enclose the Follistatin-like domain. Intrachain disulfides connect C29-C40, C34-C50, C52-C82, C56-C75, and C64-C96. The Kazal-like domain occupies 46-98 (GEPTCLCIEQCKPHKRPVCGSNGKTYLNHCELHRDACLTGSKIQVDYDGHCKE). N142 is a glycosylation site (N-linked (GlcNAc...) asparagine). Residues 142–176 (NYSEILDKYFKSFDNGDSHLDSSEFLKFVEQNETA) enclose the EF-hand 1 domain. Phosphoserine is present on S163. Residues N173 and N178 are each glycosylated (N-linked (GlcNAc...) asparagine). The 36-residue stretch at 191–226 (LRSLCVDALIELSDENADWKLSFQEFLKCLNPSFNP) folds into the EF-hand 2 domain. One can recognise a VWFC domain in the interval 231-285 (CALEDETYADGAETEVDCNRCVCSCGHWVCTAMTCDGKNQKGVQTHTEEEKTGYV).

In terms of assembly, homodimer. Interacts with SCN10A. Interacts with DIP2A; DIP2A may act as a cell surface receptor for FSTL1. Interacts with BMP4. Interacts with CD14; this interaction promotes TL4-mediated signaling cascade. As to expression, during central nervous system development, strongly expressed in the telencephalon, diencephalon, brainstem, limbic system and spinal cord. Widely expressed in all organs.

The protein resides in the secreted. Its function is as follows. Secreted glycoprotein that is involved in various physiological processes, such as angiogenesis, regulation of the immune response, cell proliferation and differentiation. Plays a role in the development of the central nervous system, skeletal system, lungs, and ureter. Promotes endothelial cell survival, migration and differentiation into network structures in an AKT-dependent manner. Also promotes survival of cardiac myocytes. Initiates various signaling cascades by activating different receptors on the cell surface such as DIP2A, TLR4 or BMP receptors. The chain is Follistatin-related protein 1 (Fstl1) from Mus musculus (Mouse).